Reading from the N-terminus, the 126-residue chain is Holo-[acyl-carrier-protein] synthase (126 aa).

The Mg(2+) site is built by Asp-9 and Glu-58.

Belongs to the P-Pant transferase superfamily. AcpS family. Requires Mg(2+) as cofactor.

It is found in the cytoplasm. The enzyme catalyses apo-[ACP] + CoA = holo-[ACP] + adenosine 3',5'-bisphosphate + H(+). Functionally, transfers the 4'-phosphopantetheine moiety from coenzyme A to a Ser of acyl-carrier-protein. In Vibrio vulnificus (strain CMCP6), this protein is Holo-[acyl-carrier-protein] synthase.